Reading from the N-terminus, the 341-residue chain is Porin-like protein L (341 aa).

An N-terminal signal peptide occupies residues 1–21 (MNKKLIALAVAAASISSVATA).

It belongs to the Gram-negative porin family. As to quaternary structure, homotrimer.

It is found in the cell outer membrane. Its function is as follows. Forms pores that allow passive diffusion of small molecules across the outer membrane. This chain is Porin-like protein L (ompL), found in Photobacterium profundum (strain SS9).